A 299-amino-acid chain; its full sequence is Pseudouridine-5'-phosphate glycosidase (299 aa).

Glu23 acts as the Proton donor in catalysis. Substrate-binding residues include Lys84 and Val104. Asp136 is a Mn(2+) binding site. 138–140 (SAD) lines the substrate pocket. Lys157 (nucleophile) is an active-site residue.

It belongs to the pseudouridine-5'-phosphate glycosidase family. Homotrimer. The cofactor is Mn(2+).

The enzyme catalyses D-ribose 5-phosphate + uracil = psi-UMP + H2O. Functionally, catalyzes the reversible cleavage of pseudouridine 5'-phosphate (PsiMP) to ribose 5-phosphate and uracil. Functions biologically in the cleavage direction, as part of a pseudouridine degradation pathway. The polypeptide is Pseudouridine-5'-phosphate glycosidase (Solibacter usitatus (strain Ellin6076)).